Consider the following 524-residue polypeptide: Keratin, type II cytoskeletal 71 (524 aa).

A head region spans residues 1-130; that stretch reads MNRQFTCKSG…DPEIQKVRAQ (130 aa). Positions 131–166 are coil 1A; that stretch reads EREQIKALNNKFASFIDKVRFLEQQNQVLETKWELL. In terms of domain architecture, IF rod spans 131 to 444; that stretch reads EREQIKALNN…KLLESEECRM (314 aa). Residues 167 to 185 form a linker 1 region; the sequence is QQLDLNNCKNNLEPILEGY. A coil 1B region spans residues 186–277; the sequence is ISNLRKQLET…CLYEAEIAQI (92 aa). Positions 278–301 are linker 12; that stretch reads QSHISDMSVILSMDNNRDLNLDSI. A coil 2 region spans residues 302–440; sequence IDEVRAQYEE…ATYRKLLESE (139 aa). The tail stretch occupies residues 441-524; that stretch reads ECRMSGEFPS…QSASSKKASR (84 aa). The segment at 491 to 524 is disordered; that stretch reads VRGGEGRSRGSTSDYKDTLGKGSSQSASSKKASR. The segment covering 494-509 has biased composition (basic and acidic residues); sequence GEGRSRGSTSDYKDTL. Positions 510-524 are enriched in low complexity; the sequence is GKGSSQSASSKKASR.

The protein belongs to the intermediate filament family. As to quaternary structure, heterodimer of a type I and a type II keratin. Associates with KRT16 and/or KRT17.

The protein resides in the cytoplasm. The protein localises to the cytoskeleton. Functionally, plays a central role in hair formation. Essential component of keratin intermediate filaments in the inner root sheath (IRS) of the hair follicle. The chain is Keratin, type II cytoskeletal 71 (KRT71) from Felis catus (Cat).